A 1038-amino-acid chain; its full sequence is uncharacterized protein (1038 aa).

Polar residues predominate over residues 1–14 (MEENTAQKQSNATG). A disordered region spans residues 1 to 100 (MEENTAQKQS…QSENENYDFS (100 aa)). Positions 58–71 (NPERELNSDGTDRI) are enriched in basic and acidic residues. Residues 72–83 (IEEEEEEDDIEN) show a composition bias toward acidic residues. Residues Ser112, Ser113, and Ser114 each carry the phosphoserine modification. Disordered regions lie at residues 144-201 (GKDP…VKRR), 360-381 (ELDN…TEQA), 422-441 (SHSN…DEKL), 454-526 (QTTK…SGEL), and 556-575 (TNSE…QPGT). Over residues 156–179 (SSMASSSTRSSQSSQVSAIQPQSQ) the composition is skewed to low complexity. Residues 180-198 (DDNRVSDIRQMENRRELNV) show a composition bias toward basic and acidic residues. Composition is skewed to basic and acidic residues over residues 426–441 (HSNE…DEKL) and 489–505 (DAEK…EHHP). Residue Ser436 is modified to Phosphoserine. Residues 506 to 522 (SITSVNSPFLYSPSKQP) are compositionally biased toward polar residues. A phosphoserine mark is found at Ser618 and Ser856. Disordered regions lie at residues 803 to 864 (RGSL…ASAD), 940 to 974 (GEAP…SPAR), and 1005 to 1024 (KAKS…KESK). The span at 826–859 (TLSLKTSTTGLSSHSKSAENNSTQQSTTSPSINS) shows a compositional bias: low complexity. A compositionally biased stretch (polar residues) spans 955–974 (VSTTTKLAKRITQPSLSPAR). Low complexity predominate over residues 1009–1020 (EQSNAKSSSSSI).

The protein localises to the cytoplasm. This is an uncharacterized protein from Schizosaccharomyces pombe (strain 972 / ATCC 24843) (Fission yeast).